A 208-amino-acid chain; its full sequence is Uracil phosphoribosyltransferase (208 aa).

5-phospho-alpha-D-ribose 1-diphosphate contacts are provided by residues arginine 78, arginine 103, and 130–138; that span reads DPMLATGGS. Uracil-binding positions include isoleucine 193 and 198–200; that span reads GDA. Aspartate 199 contacts 5-phospho-alpha-D-ribose 1-diphosphate.

This sequence belongs to the UPRTase family. The cofactor is Mg(2+).

It catalyses the reaction UMP + diphosphate = 5-phospho-alpha-D-ribose 1-diphosphate + uracil. The protein operates within pyrimidine metabolism; UMP biosynthesis via salvage pathway; UMP from uracil: step 1/1. With respect to regulation, allosterically activated by GTP. Its function is as follows. Catalyzes the conversion of uracil and 5-phospho-alpha-D-ribose 1-diphosphate (PRPP) to UMP and diphosphate. This chain is Uracil phosphoribosyltransferase, found in Shewanella sp. (strain ANA-3).